A 1306-amino-acid chain; its full sequence is MALRPGAGASGAAGAGAGPGGAGSFMFPVAGGMRPPQAGLIPMQQQGFPMVSVMQPNMQGMMGMNYSSQMSQGPIAMQAGIPMGPMPAAGVPFLGQPPFLSMRPAGPQYTPDMQKQFAEEQQKRFEQQQKLLEEERKRRQFEEQKQKLRLLSSVKPKTGEKNRDDALEAIKGNLDGFSRDAKMHPTPASHPKKQGPSLEEKLLVSCDVSASGQEHIKLNTPDAGHKAIVPGSSKNCPGLMAHNRGAVDGCVSGPASAEAEKTSDQTLSKEESGVGVFPSQDPAQSRMPPWIYNESLVPDAYKKILETTMTPTGIDTAKLYPILMSSGLPRETLGQIWALANRTTPGRLTKEELYTVLAMVAVTQRGVPAMSPDALSQFPAAPIPTLSGFPMTLPTPVSQPTAMPSGPTGSMPLTLGQPIMGINLVGPVGGAAAPTSSGFMPAYPSNQVGKTEEDDFQDFQDASKSGSIDDSFTDFQEMPASSKTSNSQHGNSAPSLLIPFPGTKASTDKYAVFKGISTDKPSENPASFGESGDKYSAFRELEQTTDSKPLGESFAEFRSTGTDDGFTDFKTADSVSPLEPPTKDTFPSAFASGAAQQTQTQVKTPLNLEDLDMFSSVDCSGEKQVPFSATFSTAKSVSTRPQPAGSAAASAALASTKTSSLADDFGEFNLFGEYSNPASAGEQDDFADFMAFGNSSISSEPKASDKYEALREEVSPSPLSSSTVEGAQHPPAAATKYDVFKQLSLEGAGLAMEEFKENTSSTKSEDDFADFHSSKFSSTSSDKSLGEKAVAFRHAKEDSSSVKSLDLPSIGGSSVGKEDSEDALSVQFDMKLADVGGDLKHVMSDSSLDLPTVSGQHPPAADTEDLSCAAFGSCSSHFTVSTLTSCEWSDRADALQGRKLSPFVLSAGSRSFSATSNLHTKEISFGSSENITMSSLSKGSALASEDALPETAFPAFASFKDMMPQTTEQKEFESGDFQDFTRQDMPTVDRSQETSCPSPASSVASHETPKEGADDFGEFQSEKSKISKFDFLVANSQSKMKSSEEMIKSELATFDLSVQGSHKRSLSLGDKEISRSSPSPALEQPFRDRSNTLSERAALPVIRDKYKDLTGEVEENERYAYEWQRCLGSALDVIKKANDTLNGISSSAVCTEVIQSAQGMEYLLGVVEVYRVTKRVELGIKATAVCSEKLQQLLKDIDKVWNNLIGFMSLATLTPDENSLDFSSCMLRPGIKNAQELACGVCLLNVDSRSRKEETPAEEQPKKAFNSETDSFKLAYGGHQYHASCANFWINCVEPKPPGLLLPDLL.

Residues 113–153 adopt a coiled-coil conformation; it reads MQKQFAEEQQKRFEQQQKLLEEERKRRQFEEQKQKLRLLSS. Disordered regions lie at residues 176–196 and 252–285; these read GFSR…KQGP and SGPA…PAQS. The segment covering 258–272 has biased composition (basic and acidic residues); that stretch reads EAEKTSDQTLSKEES. Positions 293–404 constitute an EH domain; it reads NESLVPDAYK…TPVSQPTAMP (112 aa). The short motif at 455 to 459 is the DFXDF motif 1 element; it reads DFQDF. Positions 460–494 are disordered; the sequence is QDASKSGSIDDSFTDFQEMPASSKTSNSQHGNSAP. Phosphoserine is present on Ser471. Lys509 bears the N6-acetyllysine mark. Positions 514 to 778 are interaction with AP1G1; it reads KGISTDKPSE…ADFHSSKFSS (265 aa). The disordered stretch occupies residues 559–601; that stretch reads STGTDDGFTDFKTADSVSPLEPPTKDTFPSAFASGAAQQTQTQ. Ser576 carries the post-translational modification Phosphoserine. The segment at 661-673 is interaction with AP1G1, AP1G2 and GGA1; that stretch reads LADDFGEFNLFGE. Residues 685–689 carry the DFXDF motif 2 motif; sequence DFADF. Residues 697-730 are disordered; the sequence is ISSEPKASDKYEALREEVSPSPLSSSTVEGAQHP. Positions 702-714 are enriched in basic and acidic residues; it reads KASDKYEALREEV. Ser715 is modified (phosphoserine). At Lys736 the chain carries N6-acetyllysine. Residues Ser744 and Ser764 each carry the phosphoserine modification. A DFXDF motif 3 motif is present at residues 767–771; that stretch reads DFADF. A phosphoserine mark is found at Ser804, Ser844, Ser847, Ser901, Ser911, Ser927, Ser974, Ser998, Ser1065, Ser1067, Ser1079, and Ser1090. 2 disordered regions span residues 986–1016 and 1065–1090; these read PTVD…ADDF and SLSL…RDRS. The span at 993–1005 shows a compositional bias: polar residues; sequence ETSCPSPASSVAS. Thr1092 carries the phosphothreonine modification.

Self-associates. Interacts with GGA1 (via GAE domain). Interacts with GGA2 and GGA3. Interacts with AP1G1 (via GAE domain), a subunit of adapter protein complex AP-1. Interacts with AP1G2 (via GAE domain) a subunit of adapter protein complex AP-1. Component of the aftiphilin/p200/gamma-synergin complex, at least composed of AFTPH/aftiphilin, HEATR5B/p200a and SYNRG/gamma-synergin, which plays a role in the AP1G1/AP-1-mediated trafficking of transferrin from early to recycling endosomes. Within the complex interacts with AFTPH/aftiphilin and HEATR5B/p200a; the interactions are direct. Interacts (via EH domain) with SCAMP1.

The protein localises to the cytoplasm. It localises to the cytosol. It is found in the golgi apparatus. The protein resides in the trans-Golgi network membrane. Its subcellular location is the perinuclear region. The protein localises to the cytoplasmic vesicle. It localises to the clathrin-coated vesicle. Functionally, plays a role in endocytosis and/or membrane trafficking at the trans-Golgi network (TGN). May act by linking the adapter protein complex AP-1 to other proteins. Component of clathrin-coated vesicles. Component of the aftiphilin/p200/gamma-synergin complex, which plays roles in AP1G1/AP-1-mediated protein trafficking including the trafficking of transferrin from early to recycling endosomes, and the membrane trafficking of furin and the lysosomal enzyme cathepsin D between the trans-Golgi network (TGN) and endosomes. This chain is Synergin gamma (Synrg), found in Mus musculus (Mouse).